The following is a 447-amino-acid chain: tRNA (guanine(37)-N(1))-methyltransferase (447 aa).

Residues His241, 285 to 286 (DL), and 313 to 314 (DV) contribute to the S-adenosyl-L-methionine site.

Belongs to the class I-like SAM-binding methyltransferase superfamily. TRM5/TYW2 family. Monomer.

It localises to the mitochondrion matrix. It is found in the nucleus. The protein resides in the cytoplasm. The catalysed reaction is guanosine(37) in tRNA + S-adenosyl-L-methionine = N(1)-methylguanosine(37) in tRNA + S-adenosyl-L-homocysteine + H(+). Its function is as follows. Specifically methylates the N1 position of guanosine-37 in various cytoplasmic and mitochondrial tRNAs. Methylation is not dependent on the nature of the nucleoside 5' of the target nucleoside. This is the first step in the biosynthesis of wybutosine (yW), a modified base adjacent to the anticodon of tRNAs and required for accurate decoding. This Giardia intestinalis (strain ATCC 50803 / WB clone C6) (Giardia lamblia) protein is tRNA (guanine(37)-N(1))-methyltransferase.